Here is a 423-residue protein sequence, read N- to C-terminus: Serine--tRNA ligase (423 aa).

Over residues 1–12 the composition is skewed to basic and acidic residues; it reads MIDLKALRENPD. Residues 1-26 form a disordered region; it reads MIDLKALRENPDVGRASQRSRGEDPE. 230–232 contacts L-serine; sequence TSE. ATP contacts are provided by residues 261 to 263 and V277; that span reads RRE. Residue E284 coordinates L-serine. ATP is bound at residue 348–351; the sequence is ELTS. Position 383 (T383) interacts with L-serine.

It belongs to the class-II aminoacyl-tRNA synthetase family. Type-1 seryl-tRNA synthetase subfamily. In terms of assembly, homodimer. The tRNA molecule binds across the dimer.

The protein resides in the cytoplasm. It catalyses the reaction tRNA(Ser) + L-serine + ATP = L-seryl-tRNA(Ser) + AMP + diphosphate + H(+). The catalysed reaction is tRNA(Sec) + L-serine + ATP = L-seryl-tRNA(Sec) + AMP + diphosphate + H(+). It participates in aminoacyl-tRNA biosynthesis; selenocysteinyl-tRNA(Sec) biosynthesis; L-seryl-tRNA(Sec) from L-serine and tRNA(Sec): step 1/1. In terms of biological role, catalyzes the attachment of serine to tRNA(Ser). Is also able to aminoacylate tRNA(Sec) with serine, to form the misacylated tRNA L-seryl-tRNA(Sec), which will be further converted into selenocysteinyl-tRNA(Sec). In Beutenbergia cavernae (strain ATCC BAA-8 / DSM 12333 / CCUG 43141 / JCM 11478 / NBRC 16432 / NCIMB 13614 / HKI 0122), this protein is Serine--tRNA ligase.